Consider the following 120-residue polypeptide: MHAEEIIRSIEAEHFKETLPTIYVGDTVRVGVQIREGNKERTQPYEGTVIAKRHGGINETITVRRIFQGVGVERVFLIHSPRITNIKVVRRGKVRRAKLYYLRDRVGKATRVKQRFDREL.

It belongs to the bacterial ribosomal protein bL19 family.

Its function is as follows. This protein is located at the 30S-50S ribosomal subunit interface and may play a role in the structure and function of the aminoacyl-tRNA binding site. This chain is Large ribosomal subunit protein bL19, found in Acaryochloris marina (strain MBIC 11017).